A 481-amino-acid polypeptide reads, in one-letter code: Serine/threonine-protein kinase US3 (481 aa).

The segment at 12-63 (RPDKRQEASVPPETNTAPAFPASTFYTPAEDAYLAPGPPETIHPSRPPSPGE) is disordered. The span at 47 to 61 (PGPPETIHPSRPPSP) shows a compositional bias: pro residues. The Protein kinase domain maps to 191 to 478 (FAIHGALIPG…AAELLRLPLF (288 aa)). ATP-binding positions include 197 to 205 (LIPGSEGCV) and Lys220. Asp305 (proton acceptor) is an active-site residue.

It belongs to the protein kinase superfamily. Ser/Thr protein kinase family. In terms of assembly, interacts with host LAT; this interaction prevents LAT activation of TRAF6. Phosphorylated by UL13; this phosphorylation regulates subsequent phosphorylation of UL31 and UL34 by US3. Autophosphorylated.

It is found in the host cytoplasm. Its subcellular location is the host nucleus. It catalyses the reaction L-seryl-[protein] + ATP = O-phospho-L-seryl-[protein] + ADP + H(+). The catalysed reaction is L-threonyl-[protein] + ATP = O-phospho-L-threonyl-[protein] + ADP + H(+). In terms of biological role, multifunctional serine/threonine kinase that plays a role in several processes including egress of virus particles from the nucleus, modulation of the actin cytoskeleton and inhibition of host immune response. Phosphorylates UL31 and UL34, two critical regulators of capsid budding from nucleus to endoplasmic reticulum, thereby facilitating virion egress. Modulates and redistributes host components of the nuclear envelope, including LMNA, emerin/EMD and the nuclear matrix protein MATR3. In turn, facilitates nuclear pore impairment and capsid release through impaired nuclear envelope. Phosphorylates envelope glycoprotein B (gB), probably to direct it to the cell surface. Promotes virus intracellular spread by restructuring host cell cytoskeleton. Blocks host apoptosis to extend cell survival and allow efficient viral replication. Promotes viral gene expression by phosphorylating host HDAC2 to reduce viral genome silencing. Strongly inhibits TCR-activated signal transduction in T-cells by reducing the ubiquitination of LAT and TRAF6, leading to a suboptimal activation of LAT. Subverts host antiviral innate immunity by inhibiting type I interferon production through hyperphosphorylation of beta-catenin/CTNNB1. In addition, phosphorylates the RNA sensor RIGI and the transcription factor IRF3 to prevent the RLR-mediated antiviral signaling pathway. Hyperphosphorylates host RELA and thereby dampens NF-kappa-B signaling. Acts as an immunoevasin partly responsible for inhibition of MR1 expression and antigen presentation in response to bacterial infection. The chain is Serine/threonine-protein kinase US3 (US3) from Human herpesvirus 2 (strain HG52) (HHV-2).